The sequence spans 626 residues: DNA mismatch repair protein MutL (626 aa).

The interval 377–413 (EEPQAVKQPTQLWQPSTKPIIEEPIQEEKSWDSNEEG) is disordered. Positions 383–393 (KQPTQLWQPST) are enriched in polar residues.

This sequence belongs to the DNA mismatch repair MutL/HexB family.

This protein is involved in the repair of mismatches in DNA. It is required for dam-dependent methyl-directed DNA mismatch repair. May act as a 'molecular matchmaker', a protein that promotes the formation of a stable complex between two or more DNA-binding proteins in an ATP-dependent manner without itself being part of a final effector complex. The sequence is that of DNA mismatch repair protein MutL from Bacillus anthracis (strain A0248).